Here is a 159-residue protein sequence, read N- to C-terminus: Cytochrome b6-f complex subunit 4 (159 aa).

The next 3 helical transmembrane spans lie at 36–56 (LLYIFPVVILGTIACNVGLAV), 95–115 (LLGVLLMVSVPAGLLTVPFLE), and 131–151 (TVFLVGTVVALWLGIGATLPI).

Belongs to the cytochrome b family. PetD subfamily. As to quaternary structure, the 4 large subunits of the cytochrome b6-f complex are cytochrome b6, subunit IV (17 kDa polypeptide, petD), cytochrome f and the Rieske protein, while the 4 small subunits are petG, petL, petM and petN. The complex functions as a dimer.

The protein resides in the plastid. Its subcellular location is the chloroplast thylakoid membrane. Functionally, component of the cytochrome b6-f complex, which mediates electron transfer between photosystem II (PSII) and photosystem I (PSI), cyclic electron flow around PSI, and state transitions. This Piper cenocladum (Ant piper) protein is Cytochrome b6-f complex subunit 4.